The chain runs to 570 residues: Sulfite reductase [NADPH] hemoprotein beta-component (570 aa).

4 residues coordinate [4Fe-4S] cluster: C434, C440, C479, and C483. C483 provides a ligand contact to siroheme.

This sequence belongs to the nitrite and sulfite reductase 4Fe-4S domain family. In terms of assembly, alpha(8)-beta(8). The alpha component is a flavoprotein, the beta component is a hemoprotein. It depends on siroheme as a cofactor. Requires [4Fe-4S] cluster as cofactor.

The catalysed reaction is hydrogen sulfide + 3 NADP(+) + 3 H2O = sulfite + 3 NADPH + 4 H(+). The protein operates within sulfur metabolism; hydrogen sulfide biosynthesis; hydrogen sulfide from sulfite (NADPH route): step 1/1. Its function is as follows. Component of the sulfite reductase complex that catalyzes the 6-electron reduction of sulfite to sulfide. This is one of several activities required for the biosynthesis of L-cysteine from sulfate. This Zymomonas mobilis subsp. mobilis (strain ATCC 31821 / ZM4 / CP4) protein is Sulfite reductase [NADPH] hemoprotein beta-component.